The sequence spans 338 residues: Adenylosuccinate synthetase (338 aa).

GTP is bound by residues 12-18 and 42-44; these read GDEGKGK and GHT. The active-site Proton acceptor is the Asp13. Residues Asp13 and Gly42 each coordinate Mg(2+). IMP-binding positions include 13 to 16, 40 to 43, Thr127, Arg141, Gln179, Thr194, and Arg256; these read DEGK and NAGH. His43 acts as the Proton donor in catalysis. 252 to 258 contributes to the substrate binding site; it reads TVTGRRR. GTP contacts are provided by residues Arg258, 284–286, and 324–326; these read CLD and STG.

The protein belongs to the adenylosuccinate synthetase family. In terms of assembly, homodimer. Mg(2+) serves as cofactor.

The protein localises to the cytoplasm. The catalysed reaction is IMP + L-aspartate + GTP = N(6)-(1,2-dicarboxyethyl)-AMP + GDP + phosphate + 2 H(+). The protein operates within purine metabolism; AMP biosynthesis via de novo pathway; AMP from IMP: step 1/2. Its function is as follows. Plays an important role in the de novo pathway of purine nucleotide biosynthesis. Catalyzes the first committed step in the biosynthesis of AMP from IMP. The protein is Adenylosuccinate synthetase of Methanococcus vannielii (strain ATCC 35089 / DSM 1224 / JCM 13029 / OCM 148 / SB).